Reading from the N-terminus, the 72-residue chain is Translation initiation factor IF-1 (72 aa).

Residues 1 to 72 (MAKDDVIEID…DKGRITFRYK (72 aa)) form the S1-like domain.

It belongs to the IF-1 family. In terms of assembly, component of the 30S ribosomal translation pre-initiation complex which assembles on the 30S ribosome in the order IF-2 and IF-3, IF-1 and N-formylmethionyl-tRNA(fMet); mRNA recruitment can occur at any time during PIC assembly.

It is found in the cytoplasm. Functionally, one of the essential components for the initiation of protein synthesis. Stabilizes the binding of IF-2 and IF-3 on the 30S subunit to which N-formylmethionyl-tRNA(fMet) subsequently binds. Helps modulate mRNA selection, yielding the 30S pre-initiation complex (PIC). Upon addition of the 50S ribosomal subunit IF-1, IF-2 and IF-3 are released leaving the mature 70S translation initiation complex. In Sulfurovum sp. (strain NBC37-1), this protein is Translation initiation factor IF-1.